Reading from the N-terminus, the 402-residue chain is N-acetyltransferase Eis (402 aa).

In terms of domain architecture, N-acetyltransferase spans V3–P154. Acetyl-CoA-binding positions include V85–V87, R93–R98, and S121–E122. Y126 (proton donor) is an active-site residue. F402 (proton acceptor; via carboxylate) is an active-site residue.

It belongs to the acetyltransferase Eis family. In terms of assembly, homohexamer; trimer of dimers.

The protein localises to the secreted. The protein resides in the host cytoplasmic vesicle. It localises to the host phagosome. Its subcellular location is the extracellular vesicle. It is found in the bacterial extracellular vesicle. The protein localises to the host extracellular space. The catalysed reaction is L-lysyl-[protein] + acetyl-CoA = N(6)-acetyl-L-lysyl-[protein] + CoA + H(+). In terms of biological role, effector that is released into the host cell and affects host immune responses. Acts as an acetyltransferase that acetylates lysine residues of host proteins. The protein is N-acetyltransferase Eis of Mycobacterium bovis (strain BCG / Pasteur 1173P2).